The primary structure comprises 385 residues: 8-amino-7-oxononanoate synthase (385 aa).

Arginine 21 is a binding site for substrate. 108-109 (GF) serves as a coordination point for pyridoxal 5'-phosphate. Residue histidine 133 participates in substrate binding. Positions 179, 207, and 233 each coordinate pyridoxal 5'-phosphate. Position 236 is an N6-(pyridoxal phosphate)lysine (lysine 236). Threonine 352 is a binding site for substrate.

This sequence belongs to the class-II pyridoxal-phosphate-dependent aminotransferase family. BioF subfamily. As to quaternary structure, homodimer. The cofactor is pyridoxal 5'-phosphate.

It carries out the reaction 6-carboxyhexanoyl-[ACP] + L-alanine + H(+) = (8S)-8-amino-7-oxononanoate + holo-[ACP] + CO2. It functions in the pathway cofactor biosynthesis; biotin biosynthesis. In terms of biological role, catalyzes the decarboxylative condensation of pimeloyl-[acyl-carrier protein] and L-alanine to produce 8-amino-7-oxononanoate (AON), [acyl-carrier protein], and carbon dioxide. The chain is 8-amino-7-oxononanoate synthase from Salmonella choleraesuis (strain SC-B67).